The primary structure comprises 348 residues: Flavonol synthase/flavanone 3-hydroxylase (348 aa).

Positions 209-309 (EIVYLLKINY…RMSWPVFLEP (101 aa)) constitute a Fe2OG dioxygenase domain. The Fe cation site is built by His-234, Asp-236, and His-290.

This sequence belongs to the iron/ascorbate-dependent oxidoreductase family. L-ascorbate serves as cofactor. The cofactor is Fe cation.

It is found in the cytoplasm. It carries out the reaction a (2R,3R)-dihydroflavonol + 2-oxoglutarate + O2 = a flavonol + succinate + CO2 + H2O. The catalysed reaction is a (2S)-flavan-4-one + 2-oxoglutarate + O2 = a (2R,3R)-dihydroflavonol + succinate + CO2. Its pathway is secondary metabolite biosynthesis; flavonoid biosynthesis. In terms of biological role, catalyzes the formation of flavonols from dihydroflavonols. It can act on dihydrokaempferol to produce kaempferol, on dihydroquercetin to produce quercitin and on dihydromyricetin to produce myricetin. In Petunia hybrida (Petunia), this protein is Flavonol synthase/flavanone 3-hydroxylase (FL).